The primary structure comprises 394 residues: 1-deoxy-D-xylulose 5-phosphate reductoisomerase (394 aa).

NADPH contacts are provided by Thr-12, Gly-13, Ser-14, Ile-15, Gly-38, and Asn-126. A 1-deoxy-D-xylulose 5-phosphate-binding site is contributed by Lys-127. Position 128 (Glu-128) interacts with NADPH. Asp-151 contributes to the Mn(2+) binding site. 1-deoxy-D-xylulose 5-phosphate-binding residues include Ser-152, Glu-153, Ser-177, and His-200. Mn(2+) is bound at residue Glu-153. Residue Gly-206 participates in NADPH binding. The 1-deoxy-D-xylulose 5-phosphate site is built by Ser-213, Asn-218, Lys-219, and Glu-222. Glu-222 contacts Mn(2+).

Belongs to the DXR family. It depends on Mg(2+) as a cofactor. Mn(2+) serves as cofactor.

The enzyme catalyses 2-C-methyl-D-erythritol 4-phosphate + NADP(+) = 1-deoxy-D-xylulose 5-phosphate + NADPH + H(+). The protein operates within isoprenoid biosynthesis; isopentenyl diphosphate biosynthesis via DXP pathway; isopentenyl diphosphate from 1-deoxy-D-xylulose 5-phosphate: step 1/6. In terms of biological role, catalyzes the NADPH-dependent rearrangement and reduction of 1-deoxy-D-xylulose-5-phosphate (DXP) to 2-C-methyl-D-erythritol 4-phosphate (MEP). The protein is 1-deoxy-D-xylulose 5-phosphate reductoisomerase of Beutenbergia cavernae (strain ATCC BAA-8 / DSM 12333 / CCUG 43141 / JCM 11478 / NBRC 16432 / NCIMB 13614 / HKI 0122).